An 833-amino-acid chain; its full sequence is G-type lectin S-receptor-like serine/threonine-protein kinase RKS1 (833 aa).

An N-terminal signal peptide occupies residues 1–18 (MKVVFVIFFFFLFQFCIS). In terms of domain architecture, Bulb-type lectin spans 19-144 (VDTIMRRQSL…VTGRSFWESF (126 aa)). Topologically, residues 19 to 440 (VDTIMRRQSL…NGLSGKRRVL (422 aa)) are extracellular. N-linked (GlcNAc...) asparagine glycans are attached at residues Asn79, Asn92, Asn100, Asn109, Asn228, and Asn256. One can recognise an EGF-like domain in the interval 280 to 330 (PKEQCDNYAHCGPNGYCDSPSSKTFECTCLPGFEPKFPRHWFLRDSSGGCT). 3 cysteine pairs are disulfide-bonded: Cys284-Cys296, Cys290-Cys306, and Cys308-Cys329. Residues 338 to 421 (CSEKDGFVKL…SGQDFYIRVD (84 aa)) enclose the PAN domain. 2 N-linked (GlcNAc...) asparagine glycosylation sites follow: Asn363 and Asn376. Disulfide bonds link Cys369–Cys396 and Cys373–Cys379. Residues 441-461 (LILISLIAAVMLLTVILFCVV) form a helical membrane-spanning segment. Residues 462 to 833 (RERRKSNRHR…DVTFSDIQGR (372 aa)) are Cytoplasmic-facing. The region spanning 515–800 (FSSQNKLGAG…NLPNPKHPAF (286 aa)) is the Protein kinase domain. ATP is bound by residues 521–529 (LGAGGFGPV) and Lys543. Phosphoserine occurs at positions 549 and 564. Positions 604 to 621 (EQRAELDWPKRMEIVRGI) are caM-binding. The active-site Proton acceptor is Asp640. Phosphoserine is present on residues Ser644 and Ser657. Position 674 is a phosphothreonine (Thr674). A phosphoserine mark is found at Ser717 and Ser821.

Belongs to the protein kinase superfamily. Ser/Thr protein kinase family.

The protein localises to the cell membrane. It catalyses the reaction L-seryl-[protein] + ATP = O-phospho-L-seryl-[protein] + ADP + H(+). The enzyme catalyses L-threonyl-[protein] + ATP = O-phospho-L-threonyl-[protein] + ADP + H(+). The sequence is that of G-type lectin S-receptor-like serine/threonine-protein kinase RKS1 (RKS1) from Arabidopsis thaliana (Mouse-ear cress).